Here is a 277-residue protein sequence, read N- to C-terminus: Transcription antiterminator LicT (277 aa).

PRD domains are found at residues 65 to 170 (DIPI…EEMP) and 171 to 277 (NIIN…VKQA).

The protein belongs to the transcriptional antiterminator BglG family. Post-translationally, phosphorylated.

In terms of biological role, mediates positive regulation of the glucanase operon (licST) by functioning as an antiterminator factor of transcription. Prevents termination at terminator lic-t. In Bacillus subtilis (strain 168), this protein is Transcription antiterminator LicT (licT).